The following is a 210-amino-acid chain: Sortase A (210 aa).

Residues 1-5 lie on the Cytoplasmic side of the membrane; it reads MNKQR. A helical membrane pass occupies residues 6-26; that stretch reads IYSIVAILLFVVGGVLIGKPF. Topologically, residues 27-210 are extracellular; that stretch reads YDGYQAEKKQ…GDLVGTKAKK (184 aa). The active-site Proton donor/acceptor is the histidine 126. Cysteine 187 acts as the Acyl-thioester intermediate in catalysis.

The protein belongs to the bacterial sortase family. Class A subfamily.

The protein resides in the cell membrane. Inhibited by thiol-reactive reagents. Functionally, transpeptidase that anchors surface proteins to the cell wall. Recognizes and modifies its substrate by proteolytic cleavage of a C-terminal sorting signal. Following cleavage, a covalent intermediate is formed via a thioester bond between the sortase and its substrate, which is then transferred and covalently attached to the cell wall. This sortase recognizes a Leu-Pro-x-Thr-Gly (LPXTG) motif, which is cleaved by the sortase between the threonine and glycine residues. Important for growth in macrophages. May be critical in the early stages of inhalation anthrax. This chain is Sortase A, found in Bacillus anthracis.